An 89-amino-acid polypeptide reads, in one-letter code: UPF0175 protein APE_0276a (89 aa).

The protein belongs to the UPF0175 family.

The protein is UPF0175 protein APE_0276a of Aeropyrum pernix (strain ATCC 700893 / DSM 11879 / JCM 9820 / NBRC 100138 / K1).